Consider the following 114-residue polypeptide: BolA-like protein DDB_G0274169 (114 aa).

The segment covering 88 to 98 (TQWKKNNQTKI) has biased composition (polar residues). Residues 88–114 (TQWKKNNQTKINVDDDKSPSCKGGFGK) are disordered.

It belongs to the BolA/IbaG family.

This is BolA-like protein DDB_G0274169 from Dictyostelium discoideum (Social amoeba).